Reading from the N-terminus, the 225-residue chain is Fibroblast growth factor 11 (225 aa).

The tract at residues 1–28 (MAALASSLIRQKREVREPGGSRPVSAQR) is disordered.

Belongs to the heparin-binding growth factors family. Brain and eye, and in a segmental pattern of the embryonic body wall. In adult olfactory bulb, hippocampus and most concentrated in Purkinje cell layer of the cerebellum.

It localises to the nucleus. Probably involved in nervous system development and function. The chain is Fibroblast growth factor 11 (Fgf11) from Mus musculus (Mouse).